The primary structure comprises 404 residues: Phosphoribulokinase, chloroplastic (404 aa).

Residues 1 to 53 constitute a chloroplast transit peptide; that stretch reads MAFCSPHTTTSLRSPCTTIPNSGFRQNQVIFFTTRSSRRSNTRHGARTFQVSC. Cys69 and Cys108 are joined by a disulfide.

It belongs to the phosphoribulokinase family.

It localises to the plastid. The protein resides in the chloroplast. It catalyses the reaction D-ribulose 5-phosphate + ATP = D-ribulose 1,5-bisphosphate + ADP + H(+). Its pathway is carbohydrate biosynthesis; Calvin cycle. Its activity is regulated as follows. Light regulated via thioredoxin by reversible oxidation/reduction of sulfhydryl/disulfide groups. The sequence is that of Phosphoribulokinase, chloroplastic from Triticum aestivum (Wheat).